The following is an 834-amino-acid chain: Translation initiation factor IF-2 (834 aa).

The disordered stretch occupies residues 1–247; it reads MTEEKKFSGS…STPATVRKEQ (247 aa). The span at 45 to 101 shows a compositional bias: low complexity; it reads GGSRPSRPARPNNNNQNRPNNGGQSQNRNNQNRSNTSTGGQNRSNNGGNRNNRPGSR. Basic and acidic residues predominate over residues 109 to 125; the sequence is PMIREKKNWSTKPREGQ. 2 stretches are compositionally biased toward low complexity: residues 149-165 and 173-201; these read ASAA…ATKP and ATKP…SARN. Residues 224–233 show a composition bias toward basic residues; sequence GSKKSRRIAA. Residues 335–504 form the tr-type G domain; it reads SRPPVVTIMG…LLQAEVLELK (170 aa). The interval 344 to 351 is G1; it reads GHVDHGKT. 344–351 lines the GTP pocket; the sequence is GHVDHGKT. The tract at residues 369-373 is G2; sequence GITQH. The interval 390–393 is G3; sequence DTPG. Residues 390-394 and 444-447 contribute to the GTP site; these read DTPGH and NKID. The interval 444–447 is G4; that stretch reads NKID. A G5 region spans residues 480 to 482; the sequence is SAK.

This sequence belongs to the TRAFAC class translation factor GTPase superfamily. Classic translation factor GTPase family. IF-2 subfamily.

The protein resides in the cytoplasm. In terms of biological role, one of the essential components for the initiation of protein synthesis. Protects formylmethionyl-tRNA from spontaneous hydrolysis and promotes its binding to the 30S ribosomal subunits. Also involved in the hydrolysis of GTP during the formation of the 70S ribosomal complex. The chain is Translation initiation factor IF-2 from Leuconostoc mesenteroides subsp. mesenteroides (strain ATCC 8293 / DSM 20343 / BCRC 11652 / CCM 1803 / JCM 6124 / NCDO 523 / NBRC 100496 / NCIMB 8023 / NCTC 12954 / NRRL B-1118 / 37Y).